The chain runs to 134 residues: Small ribosomal subunit protein bS16 (134 aa).

Residues 79–134 form a disordered region; the sequence is AGIAKRPSRNNPTKGEPGKKAQERLALAKQAEEEASAKAAEAAAAAAAPAEEAASE. A compositionally biased stretch (low complexity) spans 115–134; sequence AKAAEAAAAAAAPAEEAASE.

The protein belongs to the bacterial ribosomal protein bS16 family.

This is Small ribosomal subunit protein bS16 from Brucella abortus (strain S19).